The following is a 150-amino-acid chain: Urease accessory protein UreE (150 aa).

The protein belongs to the UreE family.

The protein localises to the cytoplasm. Involved in urease metallocenter assembly. Binds nickel. Probably functions as a nickel donor during metallocenter assembly. This chain is Urease accessory protein UreE, found in Streptococcus vestibularis.